Here is a 312-residue protein sequence, read N- to C-terminus: Glyoxylate/hydroxypyruvate reductase A (312 aa).

Residue Arg-227 is part of the active site. Catalysis depends on His-275, which acts as the Proton donor.

This sequence belongs to the D-isomer specific 2-hydroxyacid dehydrogenase family. GhrA subfamily.

Its subcellular location is the cytoplasm. The enzyme catalyses glycolate + NADP(+) = glyoxylate + NADPH + H(+). The catalysed reaction is (R)-glycerate + NAD(+) = 3-hydroxypyruvate + NADH + H(+). It catalyses the reaction (R)-glycerate + NADP(+) = 3-hydroxypyruvate + NADPH + H(+). In terms of biological role, catalyzes the NADPH-dependent reduction of glyoxylate and hydroxypyruvate into glycolate and glycerate, respectively. The sequence is that of Glyoxylate/hydroxypyruvate reductase A from Escherichia coli (strain SMS-3-5 / SECEC).